Consider the following 510-residue polypeptide: Probable allantoinase 2 (510 aa).

The Zn(2+) site is built by His-97, His-99, Lys-185, His-228, His-287, and Asp-360. Position 185 is an N6-carboxylysine (Lys-185).

Belongs to the metallo-dependent hydrolases superfamily. Allantoinase family. In terms of assembly, homotetramer. The cofactor is Zn(2+). In terms of processing, carboxylation allows a single lysine to coordinate two zinc ions.

It catalyses the reaction (S)-allantoin + H2O = allantoate + H(+). It functions in the pathway nitrogen metabolism; (S)-allantoin degradation; allantoate from (S)-allantoin: step 1/1. The chain is Probable allantoinase 2 (allB2) from Dictyostelium discoideum (Social amoeba).